The sequence spans 475 residues: Fez family zinc finger protein 1 (475 aa).

Positions 28–43 match the Engrailed homology 1 repressor motif; it reads PLAFSIERIMARTPEP. 6 C2H2-type zinc fingers span residues 260–282, 288–310, 316–338, 344–366, 372–394, and 400–423; these read FTCE…MPVH, FVCK…KIIH, HKCN…TRIH, FVCE…KLTH, FKCN…MHTH, and FTCP…RKLH. Positions 428 to 475 are disordered; it reads GLARTPAGEPGTEPPPPLPQQPPMTLPPLQPPLPTPGPLQPGLHQGHQ. The segment covering 439 to 466 has biased composition (pro residues); the sequence is TEPPPPLPQQPPMTLPPLQPPLPTPGPL.

The protein belongs to the krueppel C2H2-type zinc-finger protein family. As to expression, expressed in brain. Little or no expression in other tissues. Overexpressed specifically in gastric cancers. A 2- to 20-fold increase is found in over 50% of gastric cancer tissues.

It localises to the nucleus. In terms of biological role, transcription repressor. Involved in the axonal projection and proper termination of olfactory sensory neurons (OSN). Plays a role in rostro-caudal patterning of the diencephalon and in prethalamic formation. Expression is required in OSN to cell-autonomously regulate OSN axon projections. Regulates non-cell-autonomously the layer formation of the olfactory bulb development and the interneurons. May be required for correct rostral migration of the interneuron progenitors. The protein is Fez family zinc finger protein 1 (FEZF1) of Homo sapiens (Human).